A 107-amino-acid chain; its full sequence is UPF0060 membrane protein ZMO1566 (107 aa).

4 consecutive transmembrane segments (helical) span residues 4–24 (LLYI…WAWI), 29–49 (SPLW…LLTF), 55–75 (AGKA…LWSW), and 84–104 (HWDL…LWMP).

The protein belongs to the UPF0060 family.

It is found in the cell inner membrane. This is UPF0060 membrane protein ZMO1566 from Zymomonas mobilis subsp. mobilis (strain ATCC 31821 / ZM4 / CP4).